Consider the following 287-residue polypeptide: Nucleotide-binding protein HD_0584 (287 aa).

8 to 15 (GRSGSGKS) is a binding site for ATP. 56 to 59 (DIRN) lines the GTP pocket.

It belongs to the RapZ-like family.

Its function is as follows. Displays ATPase and GTPase activities. The protein is Nucleotide-binding protein HD_0584 of Haemophilus ducreyi (strain 35000HP / ATCC 700724).